Here is a 516-residue protein sequence, read N- to C-terminus: Bifunctional pantoate ligase/cytidylate kinase (516 aa).

Residues 1–279 form a pantoate--beta-alanine ligase region; that stretch reads MVRKIFQTNA…CGSTRLIDHT (279 aa). 29 to 36 contacts ATP; sequence MGGLHPGH. His36 (proton donor) is an active-site residue. Gln64 serves as a coordination point for (R)-pantoate. Gln64 serves as a coordination point for beta-alanine. 153 to 156 is a binding site for ATP; the sequence is GEKD. A (R)-pantoate-binding site is contributed by Gln159. 190–193 contributes to the ATP binding site; the sequence is YSSR. The segment at 280 to 516 is cytidylate kinase; it reads FLMHRKPIIA…PEEVWPTPNS (237 aa).

The protein in the N-terminal section; belongs to the pantothenate synthetase family. This sequence in the C-terminal section; belongs to the cytidylate kinase family. Type 1 subfamily.

The protein localises to the cytoplasm. It catalyses the reaction (R)-pantoate + beta-alanine + ATP = (R)-pantothenate + AMP + diphosphate + H(+). The catalysed reaction is CMP + ATP = CDP + ADP. The enzyme catalyses dCMP + ATP = dCDP + ADP. Its pathway is cofactor biosynthesis; (R)-pantothenate biosynthesis; (R)-pantothenate from (R)-pantoate and beta-alanine: step 1/1. In terms of biological role, catalyzes the condensation of pantoate with beta-alanine in an ATP-dependent reaction via a pantoyl-adenylate intermediate. Functionally, catalyzes the transfer of a phosphate group from ATP to either CMP or dCMP to form CDP or dCDP and ADP, respectively. This Prochlorococcus marinus (strain NATL2A) protein is Bifunctional pantoate ligase/cytidylate kinase.